The following is a 703-amino-acid chain: Meiotic coiled-coil protein 2 (703 aa).

Composition is skewed to polar residues over residues 1-19 and 245-258; these read MQSIDLRLPSTSANHSISE and TNVRYSNSKPSTPL. Disordered regions lie at residues 1–29, 245–265, and 284–309; these read MQSIDLRLPSTSANHSISESLEHSKSELN, TNVRYSNSKPSTPLSPEDVDL, and ASTNNLSTNTSGTLKPYSLSSSRSSS. The region spanning 331 to 686 is the PUM-HD domain; that stretch reads NPSVIPESTS…KVAYLVEKWN (356 aa). Pumilio repeat units follow at residues 361–396, 397–432, 433–468, 469–504, 509–544, 545–580, 581–616, and 625–660; these read NVIIDKIIVSNDQQSSIFLQQKLKISSYDMKQNIVD, SIISQIHPLMLNRFGNFLVQRCFEHGTAPQIRQMGS, AMLGNMLKLATDPFGCHVVQKAIDNVTEDIKLAMMD, ELFLTIDVTIMHHYACHVWQKLFETQWYEYPVNVMN, ALRGKWHEVAVGENGSLVVQNMFENCVEKDKRECIE, EIIFHLDGIARGQWGNWVVQHMVENGQGEDLKRVID, ALLNRAVEFSIDQFASKVIEKAIKSGPKNFISLYLK, and RTRQPLIDIASDQYGNYLIQQIIQLGQPAEKNLVIT.

The protein is Meiotic coiled-coil protein 2 (mcp2) of Schizosaccharomyces pombe (strain 972 / ATCC 24843) (Fission yeast).